We begin with the raw amino-acid sequence, 826 residues long: DEAD-box ATP-dependent RNA helicase 13 (826 aa).

The span at 1-10 shows a compositional bias: basic and acidic residues; sequence MVTGDKESSL. Disordered stretches follow at residues 1–62 and 76–175; these read MVTG…QLDG and HLTL…GDDT. Residues 11–22 are compositionally biased toward basic residues; that stretch reads MKKRNKRSHKRK. The span at 49–58 shows a compositional bias: polar residues; it reads SFSTLFSGSG. Acidic residues predominate over residues 94 to 128; it reads EDDDDTNETVDEMIEGEEAEEDGEGRDDEDDEDDE. The stretch at 125–166 forms a coiled coil; sequence EDDEETRKKKEKKAKRNKEKKKEKKKKKQKKINEAAKNQDAS. The span at 133-154 shows a compositional bias: basic residues; it reads KKEKKAKRNKEKKKEKKKKKQK. The Q motif signature appears at 190–218; it reads SAWSSMRLHPLLMKSIYRLDFKEPTKIQK. Residues 222–439 enclose the Helicase ATP-binding domain; the sequence is NVAAYQGKDV…KLKRGSSKSK (218 aa). 235-242 serves as a coordination point for ATP; that stretch reads AETGSGKT. Residues 363-366 carry the DEAD box motif; the sequence is DEAD. Residues 476-644 form the Helicase C-terminal domain; the sequence is KIEESFIKCE…YMPAVRKRLY (169 aa). 2 coiled-coil regions span residues 666–712 and 783–810; these read LKKH…TLLS and KMKG…IGRR. A disordered region spans residues 783 to 826; the sequence is KMKGQSAEKRRDIASLKKKRKEEKIGRRDQRRNQKKQRKLMASS. Composition is skewed to basic and acidic residues over residues 788-797 and 804-814; these read SAEKRRDIAS and EEKIGRRDQRR. Over residues 815–826 the composition is skewed to basic residues; sequence NQKKQRKLMASS.

Belongs to the DEAD box helicase family. DDX24/MAK5 subfamily.

It catalyses the reaction ATP + H2O = ADP + phosphate + H(+). The sequence is that of DEAD-box ATP-dependent RNA helicase 13 (RH13) from Arabidopsis thaliana (Mouse-ear cress).